A 282-amino-acid polypeptide reads, in one-letter code: NAD(P)H-hydrate epimerase (282 aa).

The N-terminal 53 residues, 1–53, are a transit peptide targeting the mitochondrion; that stretch reads MSGLRTLLGLGLLVAGSRLPRVISQQSVCRARPIWWGTQRRGSETMAGAAVKY. Position 43 is a phosphoserine; by PKA (serine 43). Residues 59-269 form the YjeF N-terminal domain; that stretch reads AQAVDQELFN…ALEKKYQLNL (211 aa). Residue 113–117 participates in (6S)-NADPHX binding; sequence NNGGD. Asparagine 114 is a K(+) binding site. Residue lysine 138 is modified to N6-succinyllysine. Aspartate 179 provides a ligand contact to K(+). (6S)-NADPHX is bound by residues 183–189 and aspartate 212; that span reads GFSFKGD. Serine 215 is a K(+) binding site.

The protein belongs to the NnrE/AIBP family. In terms of assembly, homodimer. Interacts with APOA1 and APOA2. K(+) is required as a cofactor. In terms of processing, undergoes physiological phosphorylation during sperm capacitation, downstream to PKA activation. Detected in testis and sperm (at protein level). Expressed at high levels in heart, liver, kidney, and testis.

Its subcellular location is the mitochondrion. The protein resides in the secreted. The catalysed reaction is (6R)-NADHX = (6S)-NADHX. It carries out the reaction (6R)-NADPHX = (6S)-NADPHX. Its function is as follows. Catalyzes the epimerization of the S- and R-forms of NAD(P)HX, a damaged form of NAD(P)H that is a result of enzymatic or heat-dependent hydration. This is a prerequisite for the S-specific NAD(P)H-hydrate dehydratase to allow the repair of both epimers of NAD(P)HX. Accelerates cholesterol efflux from endothelial cells to high-density lipoprotein (HDL) and thereby regulates angiogenesis. This chain is NAD(P)H-hydrate epimerase, found in Mus musculus (Mouse).